The following is a 567-amino-acid chain: Multidrug and toxin extrusion protein 1 (567 aa).

At M1 the chain carries N-acetylmethionine. At 1-37 the chain is on the cytoplasmic side; that stretch reads MERTEESAPGPGGADAASERRGLRCLLLPGFLEELRA. The residue at position 18 (S18) is a Phosphoserine. A helical membrane pass occupies residues 38 to 58; that stretch reads LLVLAGPAFLAQLMMFLISFI. Over 59–72 the chain is Extracellular; it reads SSVFCGHLGKLELD. A helical membrane pass occupies residues 73 to 93; that stretch reads AVTLAIAVINVTGISVGHGLS. Over 94–120 the chain is Cytoplasmic; the sequence is SACDTLISQTYGSQNLKHVGVILQRGT. The helical transmembrane segment at 121–141 threads the bilayer; sequence LILLLCCFPCWALFINTEQIL. At 142–152 the chain is on the extracellular side; that stretch reads LLFRQDPDVSR. The chain crosses the membrane as a helical span at residues 153 to 173; sequence LTQTYVMIFIPALPAAFLYTL. At 174-187 the chain is on the cytoplasmic side; it reads QVKYLLNQGIVLPQ. A helical transmembrane segment spans residues 188-208; the sequence is IMTGIAANLVNALANYVFLYH. At 209–216 the chain is on the extracellular side; it reads LHLGVMGS. The chain crosses the membrane as a helical span at residues 217–237; it reads ALANTISQFALAIFLFLYILW. Topologically, residues 238-257 are cytoplasmic; the sequence is RRLHQATWGGWSWECLQDWA. Residues 258 to 277 traverse the membrane as a helical segment; that stretch reads SFLRLAIPSMLMLCIEWWAY. The Extracellular segment spans residues 278–295; the sequence is EVGSFLSGILGMVELGAQ. A helical membrane pass occupies residues 296–316; the sequence is SITYELAIIVYMIPSGFSVAA. The Cytoplasmic portion of the chain corresponds to 317–336; it reads NVRVGNALGAGNIDQAKKSS. A helical membrane pass occupies residues 337–357; that stretch reads AISLIVTELFAVTFCVLLLGC. Residues 358–370 lie on the Extracellular side of the membrane; it reads KDLVGYIFTTDRD. The helical transmembrane segment at 371 to 391 threads the bilayer; sequence IVALVAQVIPIYAVSHLFEGL. Residues 392 to 408 are Cytoplasmic-facing; sequence ACTCGGILRGTGNQKVG. A helical membrane pass occupies residues 409–429; it reads AIVNAIGYYVIGLPIGIALMF. The Extracellular segment spans residues 430–437; that stretch reads AAKLGVIG. Residues 438–458 traverse the membrane as a helical segment; it reads LWSGIIICTTCQTTCFLAFIA. Topologically, residues 459–543 are cytoplasmic; the sequence is RLNWKRACQQ…LSGKQLALRR (85 aa). Residues 544-564 form a helical membrane-spanning segment; that stretch reads GLLLLGVVLVLVGGILVRVYI. Residues 565-567 are Extracellular-facing; it reads RIE.

Belongs to the multi antimicrobial extrusion (MATE) (TC 2.A.66.1) family. As to expression, predominantly expressed in kidney and liver. Also expressed in various cells, including brain glia-like cells and capillaries, pancreatic duct cells, urinary bladder epithelium, adrenal gland cortex, heart, stomach, small intestine, thyroid gland, testes, alpha cells of the islets of Langerhans, Leydig cells, and vitamin A-storing Ito cells. Expressed in heart, stomach, small intestine, bladder, thyroid gland, adrenal gland and testes (at protein level).

Its subcellular location is the cell membrane. The protein resides in the apical cell membrane. The catalysed reaction is thiamine(out) + H(+)(in) = thiamine(in) + H(+)(out). It carries out the reaction estrone 3-sulfate(in) + H(+)(out) = estrone 3-sulfate(out) + H(+)(in). The enzyme catalyses creatinine(in) + H(+)(out) = creatinine(out) + H(+)(in). It catalyses the reaction agmatine(in) + H(+)(out) = agmatine(out) + H(+)(in). Multidrug efflux pump that functions as a H(+)/organic cation antiporter. Plays a physiological role in the excretion of cationic compounds including endogenous metabolites, drugs, toxins through the kidney and liver, into urine and bile respectively. Mediates the efflux of endogenous compounds such as creatinine, vitamin B1/thiamine, agmatine and estrone-3-sulfate. May also contribute to regulate the transport of cationic compounds in testis across the blood-testis-barrier. This Mus musculus (Mouse) protein is Multidrug and toxin extrusion protein 1 (Slc47a1).